The following is a 459-amino-acid chain: Replication initiator protein (459 aa).

Essential for pSAM2 replication. This is Replication initiator protein (repSA) from Streptomyces ambofaciens.